Here is a 254-residue protein sequence, read N- to C-terminus: MAVKRRRLLEKLLERRSRGRLHFTLIDPDKTGPGEAGEIAARAAEAGSDAILVGGSIGVTFEETDGVVKAAKRSGLPVILFPGGHTNASRHADAVLFLTVMNSDNPYYIVQAQILGAPLALKLGLEAIPTSYIIVGYGGAAGFVARARPIPYEKPELAALHALAGAMMGGRIIYLEAGSGAPKPVPPEAVAASRKLVDAAGYGGEVLLTVGGGVRTPEAARMLAEAGADVLVTGTLAEESPGKLADVVEAFKSA.

Residues Asp-27 and Ser-56 each coordinate Mg(2+). Sn-glycerol 1-phosphate contacts are provided by residues 174–180 (YLEAGSG), 212–213 (GG), and 234–235 (GT).

Belongs to the GGGP/HepGP synthase family. Group II subfamily. As to quaternary structure, homohexamer. The cofactor is Mg(2+).

The protein localises to the cytoplasm. The catalysed reaction is sn-glycerol 1-phosphate + (2E,6E,10E)-geranylgeranyl diphosphate = sn-3-O-(geranylgeranyl)glycerol 1-phosphate + diphosphate. It functions in the pathway membrane lipid metabolism; glycerophospholipid metabolism. Prenyltransferase that catalyzes the transfer of the geranylgeranyl moiety of geranylgeranyl diphosphate (GGPP) to the C3 hydroxyl of sn-glycerol-1-phosphate (G1P). This reaction is the first ether-bond-formation step in the biosynthesis of archaeal membrane lipids. The protein is Geranylgeranylglyceryl phosphate synthase of Aeropyrum pernix (strain ATCC 700893 / DSM 11879 / JCM 9820 / NBRC 100138 / K1).